The chain runs to 455 residues: tRNA modification GTPase MnmE (455 aa).

3 residues coordinate (6S)-5-formyl-5,6,7,8-tetrahydrofolate: Arg-26, Glu-86, and Arg-125. Residues 222–376 enclose the TrmE-type G domain; that stretch reads GLKTAIIGRP…VEEKINQIFF (155 aa). Asn-232 lines the K(+) pocket. Residues 232–237, 251–257, and 276–279 contribute to the GTP site; these read NVGKSS, TDIAGTT, and DTAG. Ser-236 is a Mg(2+) binding site. Thr-251, Ile-253, and Thr-256 together coordinate K(+). Thr-257 contacts Mg(2+). A (6S)-5-formyl-5,6,7,8-tetrahydrofolate-binding site is contributed by Lys-455.

The protein belongs to the TRAFAC class TrmE-Era-EngA-EngB-Septin-like GTPase superfamily. TrmE GTPase family. As to quaternary structure, homodimer. Heterotetramer of two MnmE and two MnmG subunits. The cofactor is K(+).

The protein resides in the cytoplasm. In terms of biological role, exhibits a very high intrinsic GTPase hydrolysis rate. Involved in the addition of a carboxymethylaminomethyl (cmnm) group at the wobble position (U34) of certain tRNAs, forming tRNA-cmnm(5)s(2)U34. This Lactococcus lactis subsp. cremoris (strain MG1363) protein is tRNA modification GTPase MnmE.